Here is a 526-residue protein sequence, read N- to C-terminus: Delayed-rectifier potassium channel regulatory subunit KCNS1 (526 aa).

At 1–217 (MLMLLVRGTH…LTMENPGYSL (217 aa)) the chain is on the cytoplasmic side. A helical membrane pass occupies residues 218–239 (PSKLFSCVSISVVLASIAAMCI). Over 240–270 (HSLPEYQAREAAAAVAAVAAGRSPEGVRDDP) the chain is Extracellular. Residues 271 to 293 (VLRRLEYFCIAWFSFEVSSRLLL) traverse the membrane as a helical segment. At 294–304 (APSTRNFFCHP) the chain is on the cytoplasmic side. The helical transmembrane segment at 305–322 (LNLIDIVSVLPFYLTLLA) threads the bilayer. The Extracellular segment spans residues 323–337 (GVALGDQGGKEFGHL). The chain crosses the membrane as a helical; Voltage-sensor span at residues 338–358 (GKVVQVFRLMRIFRVLKLARH). Residues 359 to 373 (STGLRSLGATLKHSY) are Cytoplasmic-facing. Residues 374–395 (REVGILLLYLAVGVSVFSGVAY) form a helical membrane-spanning segment. Over 396 to 408 (TAEKEEDVGFNTI) the chain is Extracellular. Residues 409–420 (PACWWWGTVSMT) constitute an intramembrane region (helical). The Selectivity filter signature appears at 421–426 (TVGYGD). Residues 421–428 (TVGYGDVV) lie within the membrane without spanning it. Residues 429 to 435 (PVTVAGK) lie on the Extracellular side of the membrane. Residues 436–464 (LAASGCILGGILVVALPITIIFNKFSHFY) form a helical membrane-spanning segment. Topologically, residues 465 to 526 (RRQKALEAAV…PSEPPHPQMY (62 aa)) are cytoplasmic. The disordered stretch occupies residues 491–526 (GVSEASLETSRETSQEGRSADLESQAPSEPPHPQMY). Positions 499–511 (TSRETSQEGRSAD) are enriched in basic and acidic residues.

It belongs to the potassium channel family. S (TC 1.A.1.2) subfamily. Kv9.1/KCNS1 sub-subfamily. Heterotetramer with KCNB1. Heterotetramer with KCNB2. Does not form homomultimers.

It is found in the cell membrane. In terms of biological role, potassium channel regulatory subunit that modulate the delayed rectifier voltage-gated potassium channel activity of KCNB1 and KCNB2 by altering their kinetics, expression levels, and shifting the half-inactivation potential to more polarized values. While it does not form functional channels on its own, it can form functional heterotetrameric channels with KCNB1 and KCNB2. Each regulatory subunit has unique regulatory properties that can lead to extensive inhibition, significant changes in kinetics, and/or substantial shifts in the voltage dependencies of the inactivation process. The chain is Delayed-rectifier potassium channel regulatory subunit KCNS1 from Pan troglodytes (Chimpanzee).